The following is a 276-amino-acid chain: Palmitoyltransferase ZDHHC22 (276 aa).

Residues 1-9 (MGKLKLLNT) lie on the Cytoplasmic side of the membrane. A helical membrane pass occupies residues 10 to 30 (IAPAYFYAATVVTFALHFLLF). Residues 31–45 (TPTIFQSSDVTINPA) lie on the Lumenal side of the membrane. A helical transmembrane segment spans residues 46 to 66 (MLAHISIFLFLMGNALGNYIM). Over 67–131 (TIRNPSESAN…NCIGNRNMRY (65 aa)) the chain is Cytoplasmic. Residues 101-137 (HFCKVCKKVILKRDHHCFFTGNCIGNRNMRYFIMFSI) form the DHHC domain. Cys117 serves as the catalytic S-palmitoyl cysteine intermediate. Residues 132–152 (FIMFSIYTSSSCLYSLVIGVA) form a helical membrane-spanning segment. Residues 153-165 (YLTIEYSISFENP) lie on the Lumenal side of the membrane. A helical membrane pass occupies residues 166 to 186 (LTFLTLLPLSTGYFFLGLISG). Over 187 to 188 (LQ) the chain is Cytoplasmic. A helical membrane pass occupies residues 189 to 209 (FFLVIMLYIWLGIGLVSVGFC). At 210–276 (CQQLLLVARG…WQVYHDHKHD (67 aa)) the chain is on the lumenal side.

Belongs to the DHHC palmitoyltransferase family.

It localises to the endoplasmic reticulum membrane. The protein localises to the golgi apparatus membrane. It carries out the reaction L-cysteinyl-[protein] + hexadecanoyl-CoA = S-hexadecanoyl-L-cysteinyl-[protein] + CoA. Functionally, palmitoyltransferase that could catalyze the addition of palmitate onto various protein substrates and be involved in a variety of cellular processes. The protein is Palmitoyltransferase ZDHHC22 (zdhhc22) of Danio rerio (Zebrafish).